A 202-amino-acid polypeptide reads, in one-letter code: Prephenate decarboxylase (202 aa).

The protein belongs to the prephenate decarboxylase family.

The enzyme catalyses prephenate + H(+) = 3-[(4R)-4-hydroxycyclohexa-1,5-dien-1-yl]-2-oxopropanoate + CO2. Its function is as follows. In vivo, involved in the biosynthesis of 2-carboxy-6-hydroxyoctahydroindole (Choi) present in the nonribosomal glycopeptides aeruginoside 126A and B. AerD is an unusual prephenate decarboxylase that avoids the typical aromatization of the cyclohexadienol ring of prephenate. AerD catalyzes the protonation at C8 followed by decarboxylation to produce the dihydro-4-hydroxyphenylpyruvate regioisomer A258 (H2HPP A258)(3-(4-hydroxycyclohexa- 1,5-dienyl)-2-oxopropanoic acid), which is able to undergo a nonenzymatic isomerization to produce dihydro-4-hydroxyphenylpyruvate regioisomer A295 (H2HPP A295)(3-(4-hydroxycyclohex-2-enylidene)-2-oxopropanoic acid). This Planktothrix agardhii (strain NIVA-CYA 126/8) protein is Prephenate decarboxylase.